The primary structure comprises 1062 residues: Integrin alpha-8 (1062 aa).

The signal sequence occupies residues 1-35 (MSAGTHCGPPGNRAPPFARLCCVSAALGMLWSPAC). Residues 36 to 1010 (LAFNLDVDKL…ATPNVSFSIP (975 aa)) lie on the Extracellular side of the membrane. FG-GAP repeat units lie at residues 41-104 (DVDK…RSAQ), 121-182 (NGTK…AYAE), 187-239 (RNSN…IANY), 252-305 (KQTD…STDM), 306-371 (TFIQ…LLFQ), 372-430 (DPQV…GLHS), and 434-497 (QVLQ…LHPM). The N-linked (GlcNAc...) asparagine glycan is linked to asparagine 80. Cysteine 95 and cysteine 105 are oxidised to a cystine. Residue asparagine 121 is glycosylated (N-linked (GlcNAc...) asparagine). A disulfide bridge connects residues cysteine 149 and cysteine 170. An N-linked (GlcNAc...) asparagine glycan is attached at asparagine 176. A disulfide bridge links cysteine 186 with cysteine 199. A glycan (N-linked (GlcNAc...) asparagine) is linked at asparagine 238. 4 residues coordinate Ca(2+): glutamate 274, threonine 276, aspartate 278, and glutamate 282. N-linked (GlcNAc...) asparagine glycans are attached at residues asparagine 301 and asparagine 310. Ca(2+)-binding residues include aspartate 328, asparagine 330, aspartate 332, aspartate 336, aspartate 394, asparagine 396, aspartate 398, tyrosine 400, and aspartate 402. The short motif at 454 to 456 (RGD) is the Cell attachment site element. 5 residues coordinate Ca(2+): aspartate 458, aspartate 460, asparagine 462, tyrosine 464, and aspartate 466. Asparagine 503 carries an N-linked (GlcNAc...) asparagine glycan. Intrachain disulfides connect cysteine 506–cysteine 517 and cysteine 523–cysteine 579. Residues asparagine 600 and asparagine 604 are each glycosylated (N-linked (GlcNAc...) asparagine). 2 cysteine pairs are disulfide-bonded: cysteine 640–cysteine 646 and cysteine 712–cysteine 725. N-linked (GlcNAc...) asparagine glycans are attached at residues asparagine 718, asparagine 736, asparagine 752, asparagine 779, asparagine 895, and asparagine 922. 2 disulfide bridges follow: cysteine 866-cysteine 923 and cysteine 928-cysteine 933. Asparagine 1004 is a glycosylation site (N-linked (GlcNAc...) asparagine). Residues 1011–1031 (LWVIILAILLGLLVLAILTLA) traverse the membrane as a helical segment. At 1032-1062 (LWKCGFFDRARPPQDEMTDREQLTSDKTPEA) the chain is on the cytoplasmic side.

It belongs to the integrin alpha chain family. As to quaternary structure, heterodimer of an alpha and a beta subunit. The alpha subunit is composed of a heavy and a light chain linked by a disulfide bond. Alpha-8 associates with beta-1. As to expression, in brain, expressed in deep cortex, hippocampal CA1, basolateral amygdala and striatum. In kidney, expressed in glomerular mesengium (at protein level).

The protein localises to the membrane. Its subcellular location is the cell membrane. Functionally, integrin alpha-8/beta-1 functions in the genesis of kidney and probably of other organs by regulating the recruitment of mesenchymal cells into epithelial structures. It recognizes the sequence R-G-D in a wide array of ligands including TNC, FN1, SPP1 TGFB1, TGFB3 and VTN. NPNT is probably its functional ligand in kidney genesis. Neuronal receptor for TNC it mediates cell-cell interactions and regulates neurite outgrowth of sensory and motor neurons. This chain is Integrin alpha-8 (Itga8), found in Mus musculus (Mouse).